The primary structure comprises 202 residues: Large ribosomal subunit protein uL4 (202 aa).

A disordered region spans residues H45–V71.

This sequence belongs to the universal ribosomal protein uL4 family. Part of the 50S ribosomal subunit.

One of the primary rRNA binding proteins, this protein initially binds near the 5'-end of the 23S rRNA. It is important during the early stages of 50S assembly. It makes multiple contacts with different domains of the 23S rRNA in the assembled 50S subunit and ribosome. In terms of biological role, forms part of the polypeptide exit tunnel. This is Large ribosomal subunit protein uL4 from Buchnera aphidicola subsp. Baizongia pistaciae (strain Bp).